The chain runs to 123 residues: Probable U6 snRNA-associated Sm-like protein LSm4 (123 aa).

The Sm domain occupies Leu-3 to Val-76. Basic and acidic residues predominate over residues Asn-85–Arg-97. A disordered region spans residues Asn-85–Arg-123. The span at Gly-98 to Arg-123 shows a compositional bias: gly residues.

This sequence belongs to the snRNP Sm proteins family. In terms of assembly, component of the precatalytic spliceosome (spliceosome B complex). Component of the U4/U6-U5 tri-snRNP complex, a building block of the precatalytic spliceosome (spliceosome B complex). LSM2, LSM3, LSM4, LSM5, LSM6, LSM7 and LSM8 form a heptameric, ring-shaped subcomplex (the LSM2-8 complex) that is part of the U4/U6-U5 tri-snRNP complex and the precatalytic spliceosome.

It localises to the nucleus. Plays a role in pre-mRNA splicing as component of the U4/U6-U5 tri-snRNP complex that is involved in spliceosome assembly, and as component of the precatalytic spliceosome (spliceosome B complex). The heptameric LSM2-8 complex binds specifically to the 3'-terminal U-tract of U6 snRNA. This is Probable U6 snRNA-associated Sm-like protein LSm4 (lsm-4) from Caenorhabditis elegans.